A 29-amino-acid polypeptide reads, in one-letter code: Cyclotide mobo-A (29 aa).

Positions 1–29 (GFPTCGETCTLGTCNTPGCTCSWPICTRN) form a cross-link, cyclopeptide (Gly-Asn). Intrachain disulfides connect cysteine 5–cysteine 19, cysteine 9–cysteine 21, and cysteine 14–cysteine 26.

It belongs to the cyclotide family. Moebius subfamily. This is a cyclic peptide.

Functionally, probably participates in a plant defense mechanism. The sequence is that of Cyclotide mobo-A from Melicytus obovatus (Hymenanthera obovata).